The sequence spans 965 residues: MEKTPATQTQAEPSLDKTYNPKEIEQPLYNHWEKSGYFKPNGDTSRESFCIVIPPPNVTGSLHMGHAFQQTIMDTMIRYQRMQGKNTLWQSGTDHAGIATQMVVERKIAAEEGKTRHDYGREAFIDKIWQWKAESGGTITNQMRRLGNSVDWERERFTMDEGLSNAVKEAFVRLYQENLIYRGKRLVNWDPKLHTAISDLEVENREVKGSMWHLRYPLADGVTTAEGKDYLIVATTRPETMLGDTGVAVNPEDPRYKDLIGKEIILPLINRRIPIIGDEHADMEKGTGCVKITPAHDFNDYEVGKRHALPMINIMTFDGNIRHKAEVFDTHGEISDSYSSDIPAEYQGIERFAARKTIVAEFERLGLLVEIKAHDLTVPYGDRGGVVIEPMLTDQWYVRTAPLAKVAIEAVENGDIQFVPKQYENMYYSWMRDIQDWCISRQLWWGHRIPAWYDTNGNVYVGRSEEEVRRENNLGTDISLNQDEDVLDTWFSSGLWTFSTLGWPEQTDALKTFHPTDVLVSGFDIIFFWIARMIMMTMHFIKDENGKPQVPFKTVYMTGLIRDEEGQKMSKSKGNVIDPLDMVDGISLEELLEKRTGNMMQPQLAEKIRKRTEKQFPAGIETHGTDALRFTLAALASTGRDINWDMKRLQGYRNFCNKLWNASRFVLMNTEGQDCGQHGGEMALSLADRWILAEFNQTVKAYREALDTYRFDMAANILYEFTWNQFCDWYLELSKPAINKGSEAEVRGARHTLIEVLEGLLRLAHPIIPFITETIWQRVKIVKGIEADTIMLQPFPEFAQEKTDELALTDLEWIKEAIIAVRNIRAEMNIAPGKPLEVLLRNADAGAQRRVAENLNFIQAMGRLSSVTLLSTDEEAPISVTKLINGAEVLIPMAGLVDKEAELSRLNKEIEKLDKEIGAIEGKLSNEGFVSRAPEAVVTKERERLANCNTSKEKLLAQKETIAAL.

Polar residues predominate over residues M1–E12. The disordered stretch occupies residues M1 to E23. The 'HIGH' region motif lies at P56–H66. Residues K568 to S572 carry the 'KMSKS' region motif. K571 is an ATP binding site. The stretch at M893–E960 forms a coiled coil.

This sequence belongs to the class-I aminoacyl-tRNA synthetase family. ValS type 1 subfamily. In terms of assembly, monomer.

The protein resides in the cytoplasm. The catalysed reaction is tRNA(Val) + L-valine + ATP = L-valyl-tRNA(Val) + AMP + diphosphate. In terms of biological role, catalyzes the attachment of valine to tRNA(Val). As ValRS can inadvertently accommodate and process structurally similar amino acids such as threonine, to avoid such errors, it has a 'posttransfer' editing activity that hydrolyzes mischarged Thr-tRNA(Val) in a tRNA-dependent manner. This Photorhabdus laumondii subsp. laumondii (strain DSM 15139 / CIP 105565 / TT01) (Photorhabdus luminescens subsp. laumondii) protein is Valine--tRNA ligase.